A 265-amino-acid polypeptide reads, in one-letter code: Oxidoreductase nsrR (265 aa).

The protein belongs to the avfA family.

Its pathway is secondary metabolite biosynthesis. In terms of biological role, oxidoreductase; part of the gene cluster that mediates the biosynthesis of the tetrahydroxanthone dimer neosartorin, which exhibits antibacterial activity. The two different monomeric units appear to be synthesized by the same set of enzymes, among which the Baeyer-Villiger monooxygenase nsrF is the key enzyme for the divergence of the biosynthetic routes. The pathway begins with the synthesis of atrochrysone thioester by the polyketide synthase nsrB. The atrochrysone carboxyl ACP thioesterase nsrC then breaks the thioester bond and releases the atrochrysone carboxylic acid from AacuL. Atrochrysone carboxylic acid is decarboxylated by the decarboxylase nsrE, and oxidized by the anthrone oxygenase nsrD to yield emodin. Emodin is then reduced to emodin hydroquinone by the oxidoreductase nsrR. A-ring reduction by the short chain dehydrogenase nsrJ, dehydration by the scytalone dehydratase-like protein nsrI and probable spontaneous re-oxidation, results in overall deoxygenation to chrysophanol. The Baeyer-Villiger monooxygenase nsrF accepts chrysophanol as a substrate to insert one oxygen atom at two different positions to yield the precursors of both monomric units. NsrF is promiscuous/flexible in interacting with the 2 (non methylated and methylated) aromatic rings of chrysophanol, thus diverging the biosynthetic pathway at this point. After the hydrolysis of the lactones, methylesterification by the methyltransferase nsrG yields respectively moniliphenone and 2,2',6'-trihydroxy-4-methyl-6-methoxya-cyldiphenylmethanone. The next steps are the hydroxylation by the FAD-dependent monooxygenase nsrK, followed by isomerization by the monooxygenase nsrQ. The short chain dehydrogenase/reductase nsrO then catalyzes the C-5 ketoreduction to give the xanthone skeleton of blennolide C and 5-acetylblennolide A. The acetyltransferase nsrL has a strict substrate specificity and uses only blennolide A but not blennolide C to yield 5-acetylblennolide A as the single-acetylated product. In the final step of the biosynthesis, the heterodimerization of the 2 xanthones, blennolide C and 5-acetylblennolide A, is catalyzed by the cytochrome P450 monooxygenase nsrP. NsrP can utilize at least three different xanthones as its substrates to perform the dimerization reaction. This is Oxidoreductase nsrR from Aspergillus novofumigatus (strain IBT 16806).